We begin with the raw amino-acid sequence, 470 residues long: FAD-dependent monooxygenase nvfK (470 aa).

Residues 1–23 (MEKAKFKVVIVGGSITGLTLAHC) form the signal peptide. FAD contacts are provided by Glu35, Gly49, and Arg108. N-linked (GlcNAc...) asparagine glycosylation occurs at Asn121. Residue Tyr216 is part of the active site. Asp308 and Ala321 together coordinate FAD. A helical membrane pass occupies residues 450 to 470 (ILMSIVLVAPAWVYIFSSLVW).

This sequence belongs to the paxM FAD-dependent monooxygenase family. FAD is required as a cofactor.

It is found in the membrane. The catalysed reaction is (3R)-3-farnesyl-6-hydroxy-2,3,5-trimethyl-4-oxocyclohexa-1,5-diene-1-carboxylate + 2-oxoglutarate + O2 = (3R)-[(10S)-11-epoxyfarnesyl]-2,3,5-trimethyl-6-oxido-4-oxocyclohexa-1,5-diene-1-carboxylate + succinate + CO2. The protein operates within secondary metabolite biosynthesis; terpenoid biosynthesis. Its function is as follows. FAD-dependent monooxygenase; part of the gene cluster that mediates the biosynthesis of novofumigatonin, a heavily oxygenated meroterpenoid containing a unique orthoester moiety. The first step of the pathway is the synthesis of 3,5-dimethylorsellinic acid (DMOA) by the polyketide synthase nvfA via condensation of one acetyl-CoA starter unit with 3 malonyl-CoA units and 2 methylations. DMOA is then converted to farnesyl-DMOA by the farnesyltransferase nvfB. Epoxydation by FAD-dependent monooxygenase nvfK, followed by a protonation-initiated cyclization catalyzed by the terpene cyclase nvfL leads to the production of asnavolin H. The short chain dehydrogenase nvfC then as a 3-OH dehydrogenase of asnovolin H to yield chemesin D. There are two branches to synthesize asnovolin A from chemesin D. In one branch, chemesin D undergoes Baeyer-Villiger oxidation by nvfH, methylation by nvfJ, and enoyl reduction by the nvfM D enoylreductase that reduces the double bond between C-5'and C-6', to form respectively asnovolin I, asnovolin K, and asnovolin A. In the other branch, the methylation precedes the Baeyer-Villiger oxidation and the enoyl reduction to yield asnovolin A via the asnovolin J intermediate. Asnovolin A is further converted to fumigatonoid A by the Fe(II)/2-oxoglutarate-dependent dioxygenase nvfI that catalyzes an endoperoxidation reaction. The alpha/beta hydrolase nvfD then acts as an epimerase that converts fumigatonoid A to its C-5' epimer, which then undergoes spontaneous or nvfD-catalyzed lactonization. The following step utilizes the ketoreductase nvfG to produce fumigatonoid B. The dioxygenase nvfE further converts fumigatonoid B into fumigatonoid C. Finally the Fe(II)/2-oxoglutarate-dependent dioxygenase nvfF catalyzes two rounds of oxidation to transform fumigatonoid C into the end product, novofumigatonin A. This is FAD-dependent monooxygenase nvfK from Aspergillus novofumigatus (strain IBT 16806).